We begin with the raw amino-acid sequence, 247 residues long: Putative urease accessory protein UreD homolog (247 aa).

Belongs to the UreD family. In terms of assembly, ureD, UreF and UreG form a complex that acts as a GTP-hydrolysis-dependent molecular chaperone, activating the urease apoprotein by helping to assemble the nickel containing metallocenter of UreC. The UreE protein probably delivers the nickel.

It localises to the cytoplasm. Its function is as follows. Required for maturation of urease via the functional incorporation of the urease nickel metallocenter. This Escherichia coli O157:H7 protein is Putative urease accessory protein UreD homolog.